Consider the following 149-residue polypeptide: MTYWLVPIQEDMWDVIRDKGIYGYKENLEEFIKEGDYIIIYVSKYYAKRYGGKIVGIVKVLSNWYEDQTPIYPEETVRNKGIYIYRVKVEPVVIGECDMKKILDKIRFIEDKGQIAKYLRNAPANLKRPIPESDAKIVEECLKESLLNI.

Belongs to the UPF0310 family.

This Saccharolobus solfataricus (strain ATCC 35092 / DSM 1617 / JCM 11322 / P2) (Sulfolobus solfataricus) protein is UPF0310 protein SSO2595.